The following is a 598-amino-acid chain: Elongation factor 4 (598 aa).

One can recognise a tr-type G domain in the interval aspartate 2–glutamine 184. Residues aspartate 14–threonine 19 and asparagine 131–aspartate 134 each bind GTP.

The protein belongs to the TRAFAC class translation factor GTPase superfamily. Classic translation factor GTPase family. LepA subfamily.

The protein localises to the cell membrane. It catalyses the reaction GTP + H2O = GDP + phosphate + H(+). In terms of biological role, required for accurate and efficient protein synthesis under certain stress conditions. May act as a fidelity factor of the translation reaction, by catalyzing a one-codon backward translocation of tRNAs on improperly translocated ribosomes. Back-translocation proceeds from a post-translocation (POST) complex to a pre-translocation (PRE) complex, thus giving elongation factor G a second chance to translocate the tRNAs correctly. Binds to ribosomes in a GTP-dependent manner. This chain is Elongation factor 4, found in Wolbachia sp. subsp. Brugia malayi (strain TRS).